We begin with the raw amino-acid sequence, 216 residues long: UPF0502 protein Smal_0052 (216 aa).

The protein belongs to the UPF0502 family.

This chain is UPF0502 protein Smal_0052, found in Stenotrophomonas maltophilia (strain R551-3).